The sequence spans 548 residues: MRLRNGTFLTLLLFCLCAFLSLSWYAALSGQKGDVVDVYQREFLALRDRLHAAEQESLKRSKELNLVLDEIKRAVSERQALRDGDGNRTWGRLTEDPRLKPWNGSHRHVLHLPTVFHHLPHLLAKESSLQPAVRVGQGRTGVSVVMGIPSVRREVHSYLTDTLHSLISELSPQEKEDSVIVVLIAETDSQYTSAVTENIKALFPTEIHSGLLEVISPSPHFYPDFSRLRESFGDPKERVRWRTKQNLDYCFLMMYAQSKGIYYVQLEDDIVAKPNYLSTMKNFALQQPSEDWMILEFSQLGFIGKMFKSLDLSLIVEFILMFYRDKPIDWLLDHILWVKVCNPEKDAKHCDRQKANLRIRFKPSLFQHVGTHSSLAGKIQKLKDKDFGKQALRKEHVNPPAEVSTSLKTYQHFTLEKAYLREDFFWAFTPAAGDFIRFRFFQPLRLERFFFRSGNIEHPEDKLFNTSVEVLPFDNPQSDKEALQEGRTATLRYPRSPDGYLQIGSFYKGVAEGEVDPAFGPLEALRLSIQTDSPVWVILSEIFLKKAD.

Residues 1-7 (MRLRNGT) lie on the Cytoplasmic side of the membrane. A helical; Signal-anchor for type II membrane protein transmembrane segment spans residues 8–28 (FLTLLLFCLCAFLSLSWYAAL). Topologically, residues 29–548 (SGQKGDVVDV…LSEIFLKKAD (520 aa)) are lumenal. A coiled-coil region spans residues 36 to 83 (VDVYQREFLALRDRLHAAEQESLKRSKELNLVLDEIKRAVSERQALRD). N-linked (GlcNAc...) asparagine glycosylation is found at Asn87 and Asn103.

It belongs to the glycosyltransferase 54 family. In terms of assembly, interacts with SLC35A3. It depends on a divalent metal cation as a cofactor. N-glycosylated. As to expression, widely expressed. Strongly overexpressed in pancreatic cancer.

It localises to the golgi apparatus membrane. The enzyme catalyses an N(4)-{beta-D-GlcNAc-(1-&gt;2)-alpha-D-Man-(1-&gt;3)-[alpha-D-Man-(1-&gt;6)]-beta-D-Man-(1-&gt;4)-beta-D-GlcNAc-(1-&gt;4)-beta-D-GlcNAc}-L-asparaginyl-[protein] + UDP-N-acetyl-alpha-D-glucosamine = an N(4)-{beta-D-GlcNAc-(1-&gt;2)-[beta-D-GlcNAc-(1-&gt;4)]-alpha-D-Man-(1-&gt;3)-[alpha-D-Man-(1-&gt;6)]-beta-D-Man-(1-&gt;4)-beta-D-GlcNAc-(1-&gt;4)-beta-D-GlcNAc}-L-asparaginyl-[protein] + UDP + H(+). It catalyses the reaction N(4)-{beta-D-GlcNAc-(1-&gt;2)-alpha-D-Man-(1-&gt;3)-[beta-D-GlcNAc-(1-&gt;2)-alpha-D-Man-(1-&gt;6)]-beta-D-Man-(1-&gt;4)-beta-D-GlcNAc-(1-&gt;4)-beta-D-GlcNAc}-L-asparaginyl-[protein] + UDP-N-acetyl-alpha-D-glucosamine = N(4)-{beta-D-GlcNAc-(1-&gt;2)-[beta-D-GlcNAc-(1-&gt;4)]-alpha-D-Man-(1-&gt;3)-[beta-D-GlcNAc-(1-&gt;2)-alpha-D-Man-(1-&gt;6)]-beta-D-Man-(1-&gt;4)-beta-D-GlcNAc-(1-&gt;4)-beta-D-GlcNAc}-L-asparaginyl-[protein] + UDP + H(+). The catalysed reaction is an N(4)-{beta-D-GlcNAc-(1-&gt;2)-alpha-D-Man-(1-&gt;3)-[beta-D-GlcNAc-(1-&gt;2)-[beta-D-GlcNAc-(1-&gt;6)]-alpha-D-Man-(1-&gt;6)]-beta-D-Man-(1-&gt;4)-beta-D-GlcNAc-(1-&gt;4)-beta-D-GlcNAc}-L-asparaginyl-[protein] + UDP-N-acetyl-alpha-D-glucosamine = an N(4)-{beta-D-GlcNAc-(1-&gt;2)-[beta-D-GlcNAc-(1-&gt;4)]-alpha-D-Man-(1-&gt;3)-[beta-D-GlcNAc-(1-&gt;2)-[beta-D-GlcNAc-(1-&gt;6)]-alpha-D-Man-(1-&gt;6)]-beta-D-Man-(1-&gt;4)-beta-D-GlcNAc-(1-&gt;4)-beta-D-GlcNAc}-L-asparaginyl-[protein] + UDP + H(+). It carries out the reaction an N(4)-{beta-D-GlcNAc-(1-&gt;2)-alpha-D-Man-(1-&gt;3)-[beta-D-GlcNAc-(1-&gt;2)-alpha-D-Man-(1-&gt;6)]-beta-D-Man-(1-&gt;4)-beta-D-GlcNAc-(1-&gt;4)-[alpha-L-Fuc-(1-&gt;6)]-beta-D-GlcNAc}-L-asparaginyl-[protein] + UDP-N-acetyl-alpha-D-glucosamine = N(4)-{beta-D-GlcNAc-(1-&gt;2)-[beta-D-GlcNAc-(1-&gt;4)]-alpha-D-Man-(1-&gt;3)-[beta-D-GlcNAc-(1-&gt;2)-alpha-D-Man-(1-&gt;6)]-beta-D-Man-(1-&gt;4)-beta-D-GlcNAc-(1-&gt;4)-[alpha-L-Fuc-(1-&gt;6)]-beta-D-GlcNAc}-asparaginyl-[protein] + UDP + H(+). The enzyme catalyses an N(4)-{beta-D-GlcNAc-(1-&gt;2)-alpha-D-Man-(1-&gt;3)-[beta-D-Gal-(1-&gt;4)-beta-D-GlcNAc-(1-&gt;2)-alpha-D-Man-(1-&gt;6)]-beta-D-Man-(1-&gt;4)-beta-D-GlcNAc-(1-&gt;4)-beta-D-GlcNAc}-L-asparaginyl-[protein] + UDP-N-acetyl-alpha-D-glucosamine = an N(4)-{beta-D-GlcNAc-(1-&gt;2)-[beta-D-GlcNAc-(1-&gt;4)]-alpha-D-Man-(1-&gt;3)-[beta-D-Gal-(1-&gt;4)-beta-D-GlcNAc-(1-&gt;2)-alpha-D-Man-(1-&gt;6)]-beta-D-Man-(1-&gt;4)-beta-D-GlcNAc-(1-&gt;4)-beta-D-GlcNAc}-L-asparaginyl-[protein] + UDP + H(+). It catalyses the reaction N(4)-{beta-D-GlcNAc-(1-&gt;2)-alpha-D-Man-(1-&gt;3)-[alpha-D-Man-(1-&gt;3)-{alpha-D-Man-(1-&gt;6)}-alpha-D-Man-(1-&gt;6)]-beta-D-Man-(1-&gt;4)-beta-D-GlcNAc-(1-&gt;4)-beta-D-GlcNAc}-asparaginyl-[protein] + UDP-N-acetyl-alpha-D-glucosamine = N(4)-{beta-D-GlcNAc-(1-&gt;2)-[beta-D-GlcNAc-(1-&gt;4)]-alpha-D-Man-(1-&gt;3)-[alpha-D-Man-(1-&gt;3)-{alpha-D-Man-(1-&gt;6)}-alpha-D-Man-(1-&gt;6)]-beta-D-Man-(1-&gt;4)-beta-D-GlcNAc-(1-&gt;4)-beta-D-GlcNAc}-asparaginyl-[protein] + UDP + H(+). The catalysed reaction is N(4)-{beta-D-GlcNAc-(1-&gt;2)-alpha-D-Man-(1-&gt;3)-beta-D-Man-(1-&gt;4)-beta-D-GlcNAc-(1-&gt;4)-beta-D-GlcNAc}-asparaginyl-[protein] + UDP-N-acetyl-alpha-D-glucosamine = N(4)-{beta-D-GlcNAc-(1-&gt;2)-[beta-D-GlcNAc-(1-&gt;4)]-alpha-D-Man-(1-&gt;3)-beta-D-Man-(1-&gt;4)-beta-D-GlcNAc-(1-&gt;4)-beta-D-GlcNAc}-asparaginyl-[protein] + UDP + H(+). Its pathway is protein modification; protein glycosylation. Its function is as follows. Glycosyltransferase that catalyzes the transfer of GlcNAc from UDP-GlcNAc to the GlcNAcbeta1-2Manalpha1-3 arm of the core structure of N-linked glycans through a beta1-4 linkage and participates in the production of tri- and tetra-antennary N-linked sugar chains. Prefers complex-type N-glycans over hybrid-types. Has lower affinities for donors or acceptors than MGAT4A, suggesting that, under physiological conditions, it is not the main contributor in N-glycan biosynthesis. The polypeptide is Alpha-1,3-mannosyl-glycoprotein 4-beta-N-acetylglucosaminyltransferase B (Homo sapiens (Human)).